Reading from the N-terminus, the 864-residue chain is Dynamin-1 (864 aa).

Residues 28 to 294 enclose the Dynamin-type G domain; it reads DLDLPQIAVV…LTNHIRDTLP (267 aa). Positions 38-45 are G1 motif; the sequence is GGQSAGKS. GDP contacts are provided by S41, G43, K44, S45, S46, R59, and G60. Positions 64-66 are G2 motif; it reads VTR. A Phosphotyrosine modification is found at Y80. At Y125 the chain carries 3'-nitrotyrosine; alternate. A Phosphotyrosine; alternate modification is found at Y125. The tract at residues 136-139 is G3 motif; sequence DLPG. A G4 motif region spans residues 205–208; sequence TKLD. Residues K206, D208, D211, N236, R237, and Q239 each contribute to the GDP site. The tract at residues 235–238 is G5 motif; it reads VNRS. S306 and S347 each carry phosphoserine. Y354 is subject to Phosphotyrosine. Residue S512 is modified to Phosphoserine. Residues 519–625 enclose the PH domain; that stretch reads LVIRKGWLTI…WKASFLRAGV (107 aa). The region spanning 659-750 is the GED domain; that stretch reads VETIRNLVDS…IIGDINTTTV (92 aa). A disordered region spans residues 767 to 864; sequence SVPAGRRSPT…PESPRPPFDL (98 aa). Residue S774 is modified to Phosphoserine; by CDK5. The residue at position 778 (S778) is a Phosphoserine. Omega-N-methylarginine is present on R796. S822 carries the phosphoserine modification. A compositionally biased stretch (pro residues) spans 825–843; sequence PFGPPPQVPSRPNRAPPGV. A phosphoserine mark is found at S851 and S857.

This sequence belongs to the TRAFAC class dynamin-like GTPase superfamily. Dynamin/Fzo/YdjA family. In terms of assembly, homodimer; homodimerization is mediated by the dynamin-type G domain which promotes assembly-stimulated GTPase activity. Homo-tetramer formed from two dimers in the absence of lipid. Oligomerizes into a helical polymer that self-assembles around the vesicle membrane, when associated to the menbrane through lipid binding. Interacts (via C-terminal proline-rich domain (PRD)) with SNX9 (via SH3 domain); this interaction allows regulation of DNM1 self-assembly during late stages of endocytic vesicle formation and supports DNM1's early functions in accelerating clathrin-coated pits (CCPs) maturation in non neuronals cell. Interacts (via C-terminal proline-rich domain (PRD)) with MYO1E (via SH3 domain); this interaction regulates receptor-mediated endocytosis. Interacts with SNX33 (via SH3 domain); this interaction decreases DNM1-dependent endocytosis. Interacts with DIAPH1. Interacts with GRB2 (via SH3 domain); this interaction mediates disassembly of DNM1 polymers, therefore modulates self-assembly. Forms a complex with BIN1 (via SH3 domain) and SH3GL2 (via SH3 domain). Forms a complex with SH3GL2 (via SH3 domain) and AMPH (via SH3 domain). Forms a complex with SH3GL2 (via SH3 domain) and SYNJ1. Interacts with AMPH. Interacts (via C-terminal proline-rich domain (PRD)) with SYT1; this interaction facilitates vesicle fission during clathrin-mediated endocytosis (CME). Interacts (via C-terminal proline-rich domain (PRD)) with PLCG1 (via SH3 domain); this interaction stimulates the release of GDP from DNM1 and enhances DNM1-dependent endocytosis. Interacts with SNPH; this interaction inhibits the binding of DNM1 to AMPH and DNM1-receptor-mediated endocytosis. Interacts with CAV1. Interacts with SH3GLB1 (via SH3 domain). Interacts with PACSIN1 (via SH3 domain), PACSIN2 (via SH3 domain) and PACSIN3 (via SH3 domain). Interacts with UNC119; this interaction decreases DNM1's GTPase activity and affects DNM1's interaction with AMPH. Interacts (GTP-bound form) with DNAJC6; this interaction allows clathrin-coated vesicle (CCV) formation at the plasma membrane. In terms of processing, phosphorylation at Ser-774 by GSK3B/GSK3-beta leads to inactivation of receptor-mediated endocytosis in non-neuronal cells. Dephosphorylation at Ser-774, through the EGFR downstream signaling, leads to activation and regulates early stages of clathrin-mediated endocytosis (CME). Phosphorylated by CDK5 leading to synaptic vesicle endocytosis (SVE) activation. As to expression, brain-specific (peripheral sensory neurons).

The protein resides in the cytoplasmic vesicle. It is found in the clathrin-coated vesicle. The protein localises to the golgi apparatus. It localises to the cell membrane. Its subcellular location is the membrane. The protein resides in the clathrin-coated pit. It is found in the presynapse. The protein localises to the secretory vesicle. It localises to the chromaffin granule. The enzyme catalyses GTP + H2O = GDP + phosphate + H(+). Functionally, catalyzes the hydrolysis of GTP and utilizes this energy to mediate vesicle scission and participates in many forms of endocytosis, such as clathrin-mediated endocytosis or synaptic vesicle endocytosis as well as rapid endocytosis (RE). Associates to the membrane, through lipid binding, and self-assembles into rings and stacks of interconnected rings through oligomerization to form a helical polymer around the vesicle membrane leading to constriction of invaginated coated pits around their necks. Self-assembly of the helical polymer induces membrane tubules narrowing until the polymer reaches a length sufficient to trigger GTP hydrolysis. Depending on the curvature imposed on the tubules, membrane detachment from the helical polymer upon GTP hydrolysis can cause spontaneous hemifission followed by complete fission. May play a role in regulating early stages of clathrin-mediated endocytosis in non-neuronal cells through its activation by dephosphorylation via the signaling downstream of EGFR. Controls vesicle size at a step before fission, during formation of membrane pits, at hippocampal synapses. Controls plastic adaptation of the synaptic vesicle recycling machinery to high levels of activity. Mediates rapid endocytosis (RE), a Ca(2+)-dependent and clathrin- and K(+)-independent process in chromaffin cells. Microtubule-associated force-producing protein involved in producing microtubule bundles and able to bind and hydrolyze GTP. Through its interaction with DNAJC6, acts during the early steps of clathrin-coated vesicle (CCV) formation. The polypeptide is Dynamin-1 (Dnm1) (Rattus norvegicus (Rat)).